Here is a 790-residue protein sequence, read N- to C-terminus: Alpha,alpha-trehalose-phosphate synthase [UDP-forming] B (790 aa).

It in the N-terminal section; belongs to the glycosyltransferase 20 family. The protein in the C-terminal section; belongs to the trehalose phosphatase family.

The enzyme catalyses D-glucose 6-phosphate + UDP-alpha-D-glucose = alpha,alpha-trehalose 6-phosphate + UDP + H(+). Synthesizes trehalose 6-phosphate, the precursor for the production of trehalose, the main carbohydrate storage reserve of the dormant spore. Trehalose accumulates in both prestalk and prespore cells and then is rapidly metabolized during terminal differentiation of stalk cells, while being stored in spores, where it serves as the principal energy and carbon source for germination. This Dictyostelium discoideum (Social amoeba) protein is Alpha,alpha-trehalose-phosphate synthase [UDP-forming] B (tpsB).